Reading from the N-terminus, the 118-residue chain is Large ribosomal subunit protein uL18 (118 aa).

This sequence belongs to the universal ribosomal protein uL18 family. In terms of assembly, part of the 50S ribosomal subunit; part of the 5S rRNA/L5/L18/L25 subcomplex. Contacts the 5S and 23S rRNAs.

Its function is as follows. This is one of the proteins that bind and probably mediate the attachment of the 5S RNA into the large ribosomal subunit, where it forms part of the central protuberance. The protein is Large ribosomal subunit protein uL18 of Dichelobacter nodosus (strain VCS1703A).